We begin with the raw amino-acid sequence, 123 residues long: Large ribosomal subunit protein bL12 (123 aa).

Positions 98-123 (KEGVSKEEAEEIKSKLEDAGATVELK) are disordered. Residues 100 to 115 (GVSKEEAEEIKSKLED) are compositionally biased toward basic and acidic residues.

Belongs to the bacterial ribosomal protein bL12 family. In terms of assembly, homodimer. Part of the ribosomal stalk of the 50S ribosomal subunit. Forms a multimeric L10(L12)X complex, where L10 forms an elongated spine to which 2 to 4 L12 dimers bind in a sequential fashion. Binds GTP-bound translation factors.

Functionally, forms part of the ribosomal stalk which helps the ribosome interact with GTP-bound translation factors. Is thus essential for accurate translation. This is Large ribosomal subunit protein bL12 from Halothermothrix orenii (strain H 168 / OCM 544 / DSM 9562).